A 462-amino-acid chain; its full sequence is MSASITAYDTIAAISTPPGEGAISIVRLSGETAVATANQVFKGKDLSQVKSHTIHYGHIVDPESGELIDEVMVSVMLAPKTFTREDVVEINCHGGIVATNRILQLLLGEGARMAEPGEFTKRAFLNGRIDLTEAESVMDLIRAKTDRAMQVAVNQLDGNLHTLIKRLRQEILEVLAQVEVNIDYPEYDTDEMTTKMLLEKAQTVQKAISNLLSTASQGKVLREGLATAIVGRPNVGKSSLLNHMLHEDKAIVTDVAGTTRDVLEEYVNVRGVPLKLVDTAGIHDTTDKVEKIGVERSRQAITQADLILLVLDQSEPLTDEDEQLIQATANKKRIIVLNKQDLPAQLDTTALLKLVSPDEIIKTAIPTSAGMDALDERIAKLFFGGIENSQTTVMVSNARQIGLLRQANKSLDAVIAGIHAGMPIDLVQIDMTAAWDKLGEITGESAPDELITQLFSQFCLGK.

Residues arginine 27, glutamate 89, and arginine 128 each coordinate (6S)-5-formyl-5,6,7,8-tetrahydrofolate. Residues 224–383 (GLATAIVGRP…LDERIAKLFF (160 aa)) enclose the TrmE-type G domain. Residue asparagine 234 coordinates K(+). GTP-binding positions include 234–239 (NVGKSS), 253–259 (TDVAGTT), and 278–281 (DTAG). Serine 238 provides a ligand contact to Mg(2+). Threonine 253, valine 255, and threonine 258 together coordinate K(+). Threonine 259 serves as a coordination point for Mg(2+). (6S)-5-formyl-5,6,7,8-tetrahydrofolate is bound at residue lysine 462.

This sequence belongs to the TRAFAC class TrmE-Era-EngA-EngB-Septin-like GTPase superfamily. TrmE GTPase family. Homodimer. Heterotetramer of two MnmE and two MnmG subunits. K(+) is required as a cofactor.

Its subcellular location is the cytoplasm. Exhibits a very high intrinsic GTPase hydrolysis rate. Involved in the addition of a carboxymethylaminomethyl (cmnm) group at the wobble position (U34) of certain tRNAs, forming tRNA-cmnm(5)s(2)U34. The polypeptide is tRNA modification GTPase MnmE (Lacticaseibacillus paracasei (strain ATCC 334 / BCRC 17002 / CCUG 31169 / CIP 107868 / KCTC 3260 / NRRL B-441) (Lactobacillus paracasei)).